Here is a 452-residue protein sequence, read N- to C-terminus: Chromosomal replication initiator protein DnaA (452 aa).

The interval 1–84 (MTENEQIFWN…SIEYVFEETQ (84 aa)) is domain I, interacts with DnaA modulators. Residues 84–110 (QSTSNSPQISQNKTAELATETLPFVQN) form a domain II region. The domain III, AAA+ region stretch occupies residues 111 to 329 (DLNPKYSFDN…GALKDISLVA (219 aa)). ATP-binding residues include glycine 155, glycine 157, lysine 158, and threonine 159. A domain IV, binds dsDNA region spans residues 330-452 (NFKKLDVITV…EMETIKNKIK (123 aa)).

Belongs to the DnaA family. Oligomerizes as a right-handed, spiral filament on DNA at oriC.

The protein localises to the cytoplasm. In terms of biological role, plays an essential role in the initiation and regulation of chromosomal replication. ATP-DnaA binds to the origin of replication (oriC) to initiate formation of the DNA replication initiation complex once per cell cycle. Binds the DnaA box (a 9 base pair repeat at the origin) and separates the double-stranded (ds)DNA. Forms a right-handed helical filament on oriC DNA; dsDNA binds to the exterior of the filament while single-stranded (ss)DNA is stabiized in the filament's interior. The ATP-DnaA-oriC complex binds and stabilizes one strand of the AT-rich DNA unwinding element (DUE), permitting loading of DNA polymerase. After initiation quickly degrades to an ADP-DnaA complex that is not apt for DNA replication. Binds acidic phospholipids. The protein is Chromosomal replication initiator protein DnaA of Streptococcus mutans serotype c (strain ATCC 700610 / UA159).